The sequence spans 293 residues: LysM and putative peptidoglycan-binding domain-containing protein 4 (293 aa).

The Extracellular segment spans residues 1–214 (MRQKEVLAKS…VADGADCGIQ (214 aa)). The segment at 28–65 (FNNGSGDSGDSSEEESHQVVLRPRGKEHQKNSSQRPGA) is disordered. A glycan (N-linked (GlcNAc...) asparagine) is linked at asparagine 30. A LysM domain is found at 71–115 (LQRELAQEDSLNKLALQYGCKVADIKKANNFIREQDLYALKSIKI). Residues 215-235 (WWNAVFLMLLIGIVLPVFYLV) traverse the membrane as a helical segment. Topologically, residues 236-293 (YFKIQATGEPSNGLNATVVPNGSMTLSPVPGQAPRLAIPVPTLPASDSQVSPTTQAGA) are cytoplasmic.

It is found in the membrane. The polypeptide is LysM and putative peptidoglycan-binding domain-containing protein 4 (Lysmd4) (Mus musculus (Mouse)).